The following is a 206-amino-acid chain: Large ribosomal subunit protein uL22m (206 aa).

The transit peptide at 1 to 40 (MAAAVLGQLGALWIHNLRSRGRLAWGVLPQSYVHTSASLD) directs the protein to the mitochondrion.

This sequence belongs to the universal ribosomal protein uL22 family. As to quaternary structure, component of the mitochondrial ribosome large subunit (39S) which comprises a 16S rRNA and about 50 distinct proteins.

The protein resides in the mitochondrion. The protein is Large ribosomal subunit protein uL22m (MRPL22) of Pongo abelii (Sumatran orangutan).